Reading from the N-terminus, the 614-residue chain is RNA polymerase sigma factor RpoD (614 aa).

The tract at residues 178-222 (THIGSDLSQSERDKDDSKDDSKDDDEDEEEEGPKGPDPEESKERF) is disordered. Basic and acidic residues predominate over residues 186–198 (QSERDKDDSKDDS). Over residues 199–208 (KDDDEDEEEE) the composition is skewed to acidic residues. The span at 209 to 222 (GPKGPDPEESKERF) shows a compositional bias: basic and acidic residues. Positions 380–450 (MVEANLRLVI…TRSIADQART (71 aa)) are sigma-70 factor domain-2. The Interaction with polymerase core subunit RpoC signature appears at 404–407 (DLIQ). The segment at 459-535 (ETINKLNRIS…DTTLELPLDS (77 aa)) is sigma-70 factor domain-3. Residues 548-601 (VLAGLTAREAKVLRMRFGIDMNTDHTLEEVGKQFDVTRERIRQIEAKALRKLRH) are sigma-70 factor domain-4. Residues 574 to 593 (LEEVGKQFDVTRERIRQIEA) constitute a DNA-binding region (H-T-H motif).

This sequence belongs to the sigma-70 factor family. RpoD/SigA subfamily. As to quaternary structure, interacts transiently with the RNA polymerase catalytic core.

The protein resides in the cytoplasm. Functionally, sigma factors are initiation factors that promote the attachment of RNA polymerase to specific initiation sites and are then released. This sigma factor is the primary sigma factor during exponential growth. The sequence is that of RNA polymerase sigma factor RpoD from Shewanella violacea (strain JCM 10179 / CIP 106290 / LMG 19151 / DSS12).